Consider the following 380-residue polypeptide: Cytochrome b (380 aa).

Transmembrane regions (helical) follow at residues 33–53 (FGSLLGLCLITQILTGLFLAM), 77–98 (WLIRNIHANGASFFFICLYLHV), 113–133 (WNIGVILLLLTMMTAFVGYVL), and 178–198 (FFAFHFLLPFVIAGASMIHLL). Positions 83 and 97 each coordinate heme b. The heme b site is built by His182 and His196. His201 contributes to the a ubiquinone binding site. Transmembrane regions (helical) follow at residues 226-246 (YKDLFGFTLMLVGLTSVALFS), 288-308 (LGGVLALLFSILVLMLVPMLH), 320-340 (LSQILFWALVADMLVLTWIGG), and 347-367 (FVLIGQVASTVYFALFLIALP).

Belongs to the cytochrome b family. In terms of assembly, the cytochrome bc1 complex contains 3 respiratory subunits (MT-CYB, CYC1 and UQCRFS1), 2 core proteins (UQCRC1 and UQCRC2) and probably 6 low-molecular weight proteins. The cofactor is heme b.

The protein localises to the mitochondrion inner membrane. Its function is as follows. Component of the ubiquinol-cytochrome c reductase complex (complex III or cytochrome b-c1 complex) that is part of the mitochondrial respiratory chain. The b-c1 complex mediates electron transfer from ubiquinol to cytochrome c. Contributes to the generation of a proton gradient across the mitochondrial membrane that is then used for ATP synthesis. This is Cytochrome b (mt-cyb) from Acipenser transmontanus (White sturgeon).